The chain runs to 101 residues: Putative pterin-4-alpha-carbinolamine dehydratase (101 aa).

The protein belongs to the pterin-4-alpha-carbinolamine dehydratase family.

The enzyme catalyses (4aS,6R)-4a-hydroxy-L-erythro-5,6,7,8-tetrahydrobiopterin = (6R)-L-erythro-6,7-dihydrobiopterin + H2O. The protein is Putative pterin-4-alpha-carbinolamine dehydratase of Nitrobacter hamburgensis (strain DSM 10229 / NCIMB 13809 / X14).